A 531-amino-acid chain; its full sequence is PHD finger protein 21B (531 aa).

Disordered stretches follow at residues 79–99 (PDSL…PTFQ), 184–222 (SADN…SLSP), 238–277 (VQTQ…ENPE), and 295–314 (EIQS…PAYS). Residues 265 to 277 (KKEDRPPTQENPE) show a composition bias toward basic and acidic residues. A PHD-type zinc finger spans residues 352–399 (DEHCAACKRGANLQPCGTCPGAYHLSCLEPPLKTAPKGVWVCPRCQQK). Positions 423–465 (KTVKEEEKQKLLQRGSELQNEHQQLEERDRRLASAVQKCLELK) form a coiled coil. Positions 507-531 (LLAGPWTKPSVAATHPTVQHPQGHN) are disordered. Polar residues predominate over residues 522 to 531 (PTVQHPQGHN).

The chain is PHD finger protein 21B (PHF21B) from Homo sapiens (Human).